The following is a 315-amino-acid chain: Lipoyl synthase (315 aa).

7 residues coordinate [4Fe-4S] cluster: Cys-62, Cys-67, Cys-73, Cys-88, Cys-92, Cys-95, and Ser-302. The Radical SAM core domain occupies 73–291 (CFGHGTATFM…GELAKKLGFS (219 aa)).

Belongs to the radical SAM superfamily. Lipoyl synthase family. [4Fe-4S] cluster is required as a cofactor.

It localises to the cytoplasm. The catalysed reaction is [[Fe-S] cluster scaffold protein carrying a second [4Fe-4S](2+) cluster] + N(6)-octanoyl-L-lysyl-[protein] + 2 oxidized [2Fe-2S]-[ferredoxin] + 2 S-adenosyl-L-methionine + 4 H(+) = [[Fe-S] cluster scaffold protein] + N(6)-[(R)-dihydrolipoyl]-L-lysyl-[protein] + 4 Fe(3+) + 2 hydrogen sulfide + 2 5'-deoxyadenosine + 2 L-methionine + 2 reduced [2Fe-2S]-[ferredoxin]. It functions in the pathway protein modification; protein lipoylation via endogenous pathway; protein N(6)-(lipoyl)lysine from octanoyl-[acyl-carrier-protein]: step 2/2. Functionally, catalyzes the radical-mediated insertion of two sulfur atoms into the C-6 and C-8 positions of the octanoyl moiety bound to the lipoyl domains of lipoate-dependent enzymes, thereby converting the octanoylated domains into lipoylated derivatives. The polypeptide is Lipoyl synthase (Coxiella burnetii (strain Dugway 5J108-111)).